Reading from the N-terminus, the 147-residue chain is Flagellar assembly factor FliW (147 aa).

This sequence belongs to the FliW family. In terms of assembly, interacts with translational regulator CsrA and flagellin(s).

The protein resides in the cytoplasm. Acts as an anti-CsrA protein, binds CsrA and prevents it from repressing translation of its target genes, one of which is flagellin. Binds to flagellin and participates in the assembly of the flagellum. This Chromobacterium violaceum (strain ATCC 12472 / DSM 30191 / JCM 1249 / CCUG 213 / NBRC 12614 / NCIMB 9131 / NCTC 9757 / MK) protein is Flagellar assembly factor FliW.